A 482-amino-acid polypeptide reads, in one-letter code: UDP-N-acetylmuramate--L-alanine ligase (482 aa).

Position 122-128 (122-128) interacts with ATP; that stretch reads GTHGKTT.

It belongs to the MurCDEF family.

The protein localises to the cytoplasm. The catalysed reaction is UDP-N-acetyl-alpha-D-muramate + L-alanine + ATP = UDP-N-acetyl-alpha-D-muramoyl-L-alanine + ADP + phosphate + H(+). The protein operates within cell wall biogenesis; peptidoglycan biosynthesis. In terms of biological role, cell wall formation. This is UDP-N-acetylmuramate--L-alanine ligase from Mycolicibacterium smegmatis (strain ATCC 700084 / mc(2)155) (Mycobacterium smegmatis).